We begin with the raw amino-acid sequence, 164 residues long: Cyclic pyranopterin monophosphate synthase (164 aa).

Residues 75–77 (MCH) and 116–117 (ME) contribute to the substrate site. The active site involves Asp-131.

The protein belongs to the MoaC family. As to quaternary structure, homohexamer; trimer of dimers.

The enzyme catalyses (8S)-3',8-cyclo-7,8-dihydroguanosine 5'-triphosphate = cyclic pyranopterin phosphate + diphosphate. It participates in cofactor biosynthesis; molybdopterin biosynthesis. In terms of biological role, catalyzes the conversion of (8S)-3',8-cyclo-7,8-dihydroguanosine 5'-triphosphate to cyclic pyranopterin monophosphate (cPMP). This chain is Cyclic pyranopterin monophosphate synthase, found in Staphylococcus aureus (strain MSSA476).